A 1079-amino-acid polypeptide reads, in one-letter code: Capping protein inhibiting regulator of actin dynamics (1079 aa).

Positions 1 to 11 (MSQENVSDKVR) are enriched in basic and acidic residues. Disordered regions lie at residues 1 to 293 (MSQE…EEER), 308 to 327 (ERKR…AEKR), 341 to 383 (EHRI…EWKR), 420 to 453 (PVTP…PTLS), 493 to 522 (EGKK…VFES), 606 to 639 (IFGQ…VQSR), and 658 to 1054 (PSFL…TTQV). Over residues 36-45 (DEGSSDEEEV) the composition is skewed to acidic residues. Residues 64-76 (SAKEKSVSHDTVQ) are compositionally biased toward basic and acidic residues. Over residues 115 to 134 (AKHKLSVKPKNQRVSRKHRR) the composition is skewed to basic residues. Residues 140–158 (HEDDFSEIQEEFEKDEEVF) show a composition bias toward acidic residues. Basic and acidic residues predominate over residues 159-293 (DSSREDYGII…EERKRAEEER (135 aa)). Over residues 420 to 434 (PVTPATGQQGETTAE) the composition is skewed to polar residues. The span at 670 to 682 (PKSQRSESGSPIQ) shows a compositional bias: polar residues. Residues 684-695 (ESEDSDTKDEDG) show a composition bias toward acidic residues. The span at 756-781 (DNSTLSEKSSPISPQQENIEFQTTVA) shows a compositional bias: polar residues. Basic and acidic residues-rich tracts occupy residues 896–930 (WREK…DKET) and 944–983 (GFRE…EDKG). The span at 984 to 993 (NGSSSIISKH) shows a compositional bias: polar residues. A compositionally biased stretch (basic and acidic residues) spans 994 to 1016 (QTADENKRPDTLLARFERRDNLK). Positions 1020-1033 (TLPSSVTVEITDST) are enriched in polar residues.

Directly interacts with actin-capping proteins; this interaction decreases the binding of capping proteins to actin.

Its subcellular location is the cytoplasm. The protein resides in the cytosol. Its function is as follows. Involved in epithelial cell integrity by acting on the maintenance of the actin cytoskeleton. Positively regulates the actin polymerization, by inhibiting the interaction of actin-capping proteins with actin. The protein is Capping protein inhibiting regulator of actin dynamics (crad) of Danio rerio (Zebrafish).